Reading from the N-terminus, the 320-residue chain is HPr kinase/phosphorylase (320 aa).

Catalysis depends on residues His141 and Lys162. Residue 156–163 (GHSGLGKS) coordinates ATP. Mg(2+) is bound at residue Ser163. The active-site Proton acceptor; for phosphorylation activity. Proton donor; for dephosphorylation activity is the Asp180. Positions 204 to 213 (LEVRGLGILN) are important for the catalytic mechanism of both phosphorylation and dephosphorylation. A Mg(2+)-binding site is contributed by Glu205. The active site involves Arg248. Residues 269-274 (PVAVGR) are important for the catalytic mechanism of dephosphorylation.

The protein belongs to the HPrK/P family. Homohexamer. Mg(2+) is required as a cofactor.

It catalyses the reaction [HPr protein]-L-serine + ATP = [HPr protein]-O-phospho-L-serine + ADP + H(+). The enzyme catalyses [HPr protein]-O-phospho-L-serine + phosphate + H(+) = [HPr protein]-L-serine + diphosphate. In terms of biological role, catalyzes the ATP- as well as the pyrophosphate-dependent phosphorylation of a specific serine residue in HPr, a phosphocarrier protein of the phosphoenolpyruvate-dependent sugar phosphotransferase system (PTS). HprK/P also catalyzes the pyrophosphate-producing, inorganic phosphate-dependent dephosphorylation (phosphorolysis) of seryl-phosphorylated HPr (P-Ser-HPr). This Neisseria meningitidis serogroup B (strain ATCC BAA-335 / MC58) protein is HPr kinase/phosphorylase.